Here is a 374-residue protein sequence, read N- to C-terminus: Pulmonary surfactant-associated protein D (374 aa).

The N-terminal stretch at 1–19 is a signal peptide; it reads MLPFLSMLVLLVQPLGNLG. An S-nitrosocysteine mark is found at Cys-34 and Cys-39. A disordered region spans residues 38–222; that stretch reads MCSPTENGLP…GIKGESGLPD (185 aa). One can recognise a Collagen-like domain in the interval 45–221; the sequence is GLPGRDGRDG…RGIKGESGLP (177 aa). Basic and acidic residues predominate over residues 49–64; sequence RDGRDGREGPRGEKGD. Positions 70–79 are enriched in low complexity; it reads PMGLSGLQGP. A glycan (N-linked (GlcNAc...) asparagine) is linked at Asn-89. Composition is skewed to low complexity over residues 137–149 and 169–200; these read KGEA…VGAP and APGV…RGPP. Residues 203 to 215 show a composition bias toward basic and acidic residues; the sequence is KGDRGVPGDRGIK. Residues 222–253 adopt a coiled-coil conformation; sequence DSAALRQQMEALKGKLQRLEVAFSHYQKAALF. Residues 259–374 enclose the C-type lectin domain; that stretch reads VGDKIFRTAD…GEQRLVICEF (116 aa). Cystine bridges form between Cys-280-Cys-372 and Cys-350-Cys-364.

This sequence belongs to the SFTPD family. In terms of assembly, oligomeric complex of 4 set of homotrimers. Post-translationally, S-nitrosylation at Cys-34 and Cys-39 alters the quaternary structure which results in a pro-inflammatory chemoattractive signaling activity with macrophages.

It is found in the secreted. The protein resides in the extracellular space. Its subcellular location is the extracellular matrix. The protein localises to the surface film. Contributes to the lung's defense against inhaled microorganisms, organic antigens and toxins. Interacts with compounds such as bacterial lipopolysaccharides, oligosaccharides and fatty acids and modulates leukocyte action in immune response. May participate in the extracellular reorganization or turnover of pulmonary surfactant. Binds strongly maltose residues and to a lesser extent other alpha-glucosyl moieties. The protein is Pulmonary surfactant-associated protein D (Sftpd) of Mus musculus (Mouse).